A 638-amino-acid polypeptide reads, in one-letter code: uncharacterized protein (638 aa).

The CID domain maps to 1 to 138 (MDLVELDYLS…KIENALLKYK (138 aa)). Disordered stretches follow at residues 318 to 338 (QPPLTHSYVHPGPQSHKYSLS) and 615 to 638 (LGKRKERDDSMDSMSSKVIKQESK).

This is an uncharacterized protein from Schizosaccharomyces pombe (strain 972 / ATCC 24843) (Fission yeast).